A 561-amino-acid polypeptide reads, in one-letter code: Carbohydrate sulfotransferase 15 (561 aa).

At 1 to 80 (MRHCINCCIQ…FLRFKKGKRC (80 aa)) the chain is on the cytoplasmic side. Residues 81-101 (SLVFGLIIMTLVMASYILSGA) form a helical; Signal-anchor for type II membrane protein membrane-spanning segment. Topologically, residues 102–561 (HQELLISSPF…ADEAFAWKTT (460 aa)) are lumenal. A 3'-phosphoadenylyl sulfate-binding site is contributed by 263-267 (KCGTT). Asn-364 carries an N-linked (GlcNAc...) asparagine glycan. Residues Arg-392 and Ser-400 each contribute to the 3'-phosphoadenylyl sulfate site.

It belongs to the sulfotransferase 1 family. Homodimer; disulfide-linked (Potential). The relevance of homodimerization is however unsure. May interact with phosphorylated proteins in resting B-cells, including HCK. A divalent metal cation is required as a cofactor. It depends on glutathione as a cofactor. In terms of processing, glycosylated. As to expression, expressed in B-cell-enriched tissues but not in fetal or adult thymus. Expressed in fetal and adult spleen, lymph node, tonsil, bone marrow and peripheral leukocytes. Not expressed in T-cells. In pro-B, pre-B, and mature B-cell lines, it colocalizes with RAG1.

The protein localises to the golgi apparatus membrane. It carries out the reaction dermatan 4'-sulfate + n 3'-phosphoadenylyl sulfate = dermatan 4',6'-bissulfate + n adenosine 3',5'-bisphosphate + n H(+). The catalysed reaction is chondroitin 4'-sulfate + n 3'-phosphoadenylyl sulfate = chondroitin 4',6'-bissulfate + n adenosine 3',5'-bisphosphate + n H(+). Its activity is regulated as follows. Inhibited by phenyl beta-GalNAc(4,6-SO(4)). Its function is as follows. Sulfotransferase that transfers sulfate from 3'-phosphoadenosine 5'-phosphosulfate (PAPS) to the C-6 hydroxyl group of the GalNAc 4-sulfate residue of chondroitin sulfate A and forms chondroitin sulfate E containing GlcA-GalNAc(4,6-SO(4)) repeating units. It also transfers sulfate to a unique non-reducing terminal sequence, GalNAc(4SO4)-GlcA(2SO4)-GalNAc(6SO4), to yield a highly sulfated structure similar to the structure found in thrombomodulin chondroitin sulfate. May also act as a B-cell receptor involved in BCR ligation-mediated early activation that mediate regulatory signals key to B-cell development and/or regulation of B-cell-specific RAG expression; however such results are unclear in vivo. This Homo sapiens (Human) protein is Carbohydrate sulfotransferase 15 (CHST15).